Reading from the N-terminus, the 104-residue chain is uncharacterized protein (104 aa).

2 disordered regions span residues 1 to 48 (MLRR…NNQP) and 66 to 104 (QENT…RRCS).

This is an uncharacterized protein from Saccharomyces cerevisiae (strain ATCC 204508 / S288c) (Baker's yeast).